Reading from the N-terminus, the 133-residue chain is Small ribosomal subunit protein uS9 (133 aa).

The disordered stretch occupies residues 114-133 (VERKKYGKKKARRSPQFSKR). A compositionally biased stretch (basic residues) spans 118-133 (KYGKKKARRSPQFSKR).

Belongs to the universal ribosomal protein uS9 family.

In Fusobacterium nucleatum subsp. nucleatum (strain ATCC 25586 / DSM 15643 / BCRC 10681 / CIP 101130 / JCM 8532 / KCTC 2640 / LMG 13131 / VPI 4355), this protein is Small ribosomal subunit protein uS9.